We begin with the raw amino-acid sequence, 118 residues long: MTALNQAHCEACRADAPQVSDEELPVLIKQIPDWNIEVRDGVMQLEKVFLFKNFKFALAFTNAMGEISEAEGHHPGLLTEWGKVTVTWWSHSIKGLHRNDFIMAARTDEVAKTAEGRK.

It belongs to the pterin-4-alpha-carbinolamine dehydratase family.

It catalyses the reaction (4aS,6R)-4a-hydroxy-L-erythro-5,6,7,8-tetrahydrobiopterin = (6R)-L-erythro-6,7-dihydrobiopterin + H2O. This chain is Putative pterin-4-alpha-carbinolamine dehydratase, found in Pseudomonas fluorescens (strain ATCC BAA-477 / NRRL B-23932 / Pf-5).